The sequence spans 368 residues: Endoglucanase (368 aa).

A signal peptide spans methionine 1–alanine 21. Catalysis depends on glutamate 55, which acts as the Proton donor. The active-site Nucleophile is aspartate 116.

Belongs to the glycosyl hydrolase 8 (cellulase D) family.

It localises to the secreted. The enzyme catalyses Endohydrolysis of (1-&gt;4)-beta-D-glucosidic linkages in cellulose, lichenin and cereal beta-D-glucans.. It functions in the pathway glycan metabolism; bacterial cellulose biosynthesis. Functionally, hydrolyzes carboxymethylcellulose. This chain is Endoglucanase (bcsZ), found in Escherichia coli O157:H7.